The primary structure comprises 101 residues: MIPGEILTDDGEHELNAGRATLSLVVANTGDRPVQVGSHYHFFEVNDALSFDRAAARGFRLNIAAGTAVRFEPGQTRTVELVALAGERAVYGFQGKVMGPL.

Belongs to the urease beta subunit family. As to quaternary structure, heterotrimer of UreA (gamma), UreB (beta) and UreC (alpha) subunits. Three heterotrimers associate to form the active enzyme.

The protein localises to the cytoplasm. It catalyses the reaction urea + 2 H2O + H(+) = hydrogencarbonate + 2 NH4(+). It participates in nitrogen metabolism; urea degradation; CO(2) and NH(3) from urea (urease route): step 1/1. This Burkholderia orbicola (strain AU 1054) protein is Urease subunit beta.